We begin with the raw amino-acid sequence, 446 residues long: MELRTKKTTVMGLAKTGVASARFLAQQGARVTATDMRDETALATVLSELAGLDIRFVLGHHDEADFTAADLVVVSPGVPQEHPLLRKTTEAGVAVVSEIELASRFITAPLVAITGTNGKTTTTTLAGELFRANGFSTYVGGNIGDPLIDLPASGEPVERAVAEISSFQLEWISSFRPKVAALLNITEDHLDRYPSYQAYINAKLRIFENQTADDFAVVNRDDELVWQAAQSLKAQLFPFSRRHELTEGIFSREGELLFRHHGQELSIPTAGFRLQGVHNLENIMAALACCLLLGCQRETSLELLNRFEALHHRMEFVREVADVRYFEDSKATNVGSVAKALESFENITLIAGGKDKGGSYAPLAELVQQRVRHLVLIGEAAERMQQELGDLTATHKAATLEEAVQLSADLTAPGGVVLLSPACSSFDMFKDYEERAQRFITAVKRL.

ATP is bound at residue 115 to 121 (GTNGKTT).

This sequence belongs to the MurCDEF family.

It is found in the cytoplasm. It catalyses the reaction UDP-N-acetyl-alpha-D-muramoyl-L-alanine + D-glutamate + ATP = UDP-N-acetyl-alpha-D-muramoyl-L-alanyl-D-glutamate + ADP + phosphate + H(+). It participates in cell wall biogenesis; peptidoglycan biosynthesis. Its function is as follows. Cell wall formation. Catalyzes the addition of glutamate to the nucleotide precursor UDP-N-acetylmuramoyl-L-alanine (UMA). The sequence is that of UDP-N-acetylmuramoylalanine--D-glutamate ligase from Trichlorobacter lovleyi (strain ATCC BAA-1151 / DSM 17278 / SZ) (Geobacter lovleyi).